A 305-amino-acid polypeptide reads, in one-letter code: Ribosomal RNA large subunit methyltransferase F (305 aa).

Belongs to the methyltransferase superfamily. METTL16/RlmF family.

Its subcellular location is the cytoplasm. It catalyses the reaction adenosine(1618) in 23S rRNA + S-adenosyl-L-methionine = N(6)-methyladenosine(1618) in 23S rRNA + S-adenosyl-L-homocysteine + H(+). Specifically methylates the adenine in position 1618 of 23S rRNA. This is Ribosomal RNA large subunit methyltransferase F from Bacteroides fragilis (strain YCH46).